A 98-amino-acid chain; its full sequence is NADH-ubiquinone oxidoreductase chain 4L (98 aa).

3 helical membrane-spanning segments follow: residues 1 to 21 (MPII…GMLI), 29 to 49 (SLLC…LMAL), and 58 to 78 (IVPI…LALL).

The protein belongs to the complex I subunit 4L family. Core subunit of respiratory chain NADH dehydrogenase (Complex I) which is composed of 45 different subunits.

The protein localises to the mitochondrion inner membrane. It carries out the reaction a ubiquinone + NADH + 5 H(+)(in) = a ubiquinol + NAD(+) + 4 H(+)(out). In terms of biological role, core subunit of the mitochondrial membrane respiratory chain NADH dehydrogenase (Complex I) which catalyzes electron transfer from NADH through the respiratory chain, using ubiquinone as an electron acceptor. Part of the enzyme membrane arm which is embedded in the lipid bilayer and involved in proton translocation. This is NADH-ubiquinone oxidoreductase chain 4L (MT-ND4L) from Nasalis larvatus (Proboscis monkey).